A 436-amino-acid chain; its full sequence is MSTGFFGDIAKIKYEGPESTNPLAFRHYNPDEIVLGKRMEDHLRFAVAYWHTFVWPGGDPFGGQTFERPWFKDTMDAAKLKADVAFEFFQLLGVPFYCFHDADVRPEGRNFAENTSNLNEIVDHFAEKQAATGVKLLWGTANLFSNRRYMGGAATNPDPDVFAFAAATVKTCIDATQRLGGENYVLWGGREGYETLLNTDLKRELDQLGRFVNLVVEYKHKIGFKGAILIEPKPQEPTKHQYDFDVATVYGFLKKYGLENEVKVNIEQGHAILAGHSFEHELALANALGIFGSIDMNRNDYQSGWDTDQFPNNVPEMALAYHHVLSGGGFKTGGTNFDAKLRRQSIDPEDLLIGHIGGMDCCARGLKAAAKMVEDKALSGPLEKRYAGWNVPEAKKMLDGGFSLDEIEAWVRKADLNPQPKSGRQEYLENVVNRYV.

Residues Asp-306 and Asp-308 each coordinate Mg(2+).

Belongs to the xylose isomerase family. Homotetramer. The cofactor is Mg(2+).

It is found in the cytoplasm. It catalyses the reaction alpha-D-xylose = alpha-D-xylulofuranose. The chain is Xylose isomerase from Sinorhizobium fredii (strain NBRC 101917 / NGR234).